We begin with the raw amino-acid sequence, 172 residues long: Shikimate kinase (172 aa).

11–16 (GAGKST) contacts ATP. S15 contacts Mg(2+). D33, R57, and G79 together coordinate substrate. Position 117 (R117) interacts with ATP. R136 serves as a coordination point for substrate. R153 is a binding site for ATP.

This sequence belongs to the shikimate kinase family. As to quaternary structure, monomer. Requires Mg(2+) as cofactor.

The protein resides in the cytoplasm. The catalysed reaction is shikimate + ATP = 3-phosphoshikimate + ADP + H(+). It participates in metabolic intermediate biosynthesis; chorismate biosynthesis; chorismate from D-erythrose 4-phosphate and phosphoenolpyruvate: step 5/7. Catalyzes the specific phosphorylation of the 3-hydroxyl group of shikimic acid using ATP as a cosubstrate. The polypeptide is Shikimate kinase (Pseudomonas paraeruginosa (strain DSM 24068 / PA7) (Pseudomonas aeruginosa (strain PA7))).